Consider the following 646-residue polypeptide: Threonine--tRNA ligase (646 aa).

Residues 1 to 61 (MIKITFPDGS…NEDADFVLYK (61 aa)) enclose the TGS domain. A catalytic region spans residues 242–541 (DHRKIGKEMQ…LIEHTAGKFP (300 aa)). Positions 337, 388, and 518 each coordinate Zn(2+).

It belongs to the class-II aminoacyl-tRNA synthetase family. Homodimer. The cofactor is Zn(2+).

Its subcellular location is the cytoplasm. The catalysed reaction is tRNA(Thr) + L-threonine + ATP = L-threonyl-tRNA(Thr) + AMP + diphosphate + H(+). Catalyzes the attachment of threonine to tRNA(Thr) in a two-step reaction: L-threonine is first activated by ATP to form Thr-AMP and then transferred to the acceptor end of tRNA(Thr). Also edits incorrectly charged L-seryl-tRNA(Thr). This is Threonine--tRNA ligase from Bacteroides thetaiotaomicron (strain ATCC 29148 / DSM 2079 / JCM 5827 / CCUG 10774 / NCTC 10582 / VPI-5482 / E50).